The following is a 392-amino-acid chain: Bifunctional enzyme Fae/Hps (392 aa).

Positions 1–161 are formaldehyde-activating enzyme; it reads MFLVGEALIG…YEKERSVHPV (161 aa). The Proton donor role is filled by H17. The substrate site is built by D19, L48, K66, T68, and Q83. The interval 162–392 is 3-hexulose-6-phosphate synthase; that stretch reads MGYRVMRLWD…IDQYRIMTDF (231 aa).

The protein in the N-terminal section; belongs to the formaldehyde-activating enzyme family. This sequence in the C-terminal section; belongs to the HPS/KGPDC family. HPS subfamily.

It catalyses the reaction 5,6,7,8-tetrahydromethanopterin + formaldehyde = 5,10-methylenetetrahydromethanopterin + H2O. The enzyme catalyses D-ribulose 5-phosphate + formaldehyde = D-arabino-hex-3-ulose 6-phosphate. The protein operates within carbohydrate biosynthesis; D-ribose 5-phosphate biosynthesis. Its function is as follows. Catalyzes the condensation of formaldehyde with tetrahydromethanopterin (H(4)MPT) to 5,10-methylenetetrahydromethanopterin. In terms of biological role, catalyzes the reversible formation of ribulose-5-phosphate and formaldehyde from 3-hexulose-6-phosphate. This Methanothrix thermoacetophila (strain DSM 6194 / JCM 14653 / NBRC 101360 / PT) (Methanosaeta thermophila) protein is Bifunctional enzyme Fae/Hps.